The chain runs to 75 residues: Stewaprin-a (75 aa).

The N-terminal stretch at 1 to 24 (MSSGGLLLLLGLLTLWAELIPVSG) is a signal peptide. Residues 27–72 (HPKKPGLCPPRPQKPPCVRECKNDWSCPGEQKCCRYGCIFECRDPI) enclose the WAP domain. Intrachain disulfides connect Cys34-Cys60, Cys43-Cys64, Cys47-Cys59, and Cys53-Cys68.

It belongs to the venom waprin family. As to expression, expressed by the venom gland.

Its subcellular location is the secreted. Damages membranes of susceptible bacteria. Has no hemolytic activity. Not toxic to mice. Does not inhibit the proteinases elastase and cathepsin G. The protein is Stewaprin-a of Hoplocephalus stephensii (Stephens's banded snake).